A 317-amino-acid chain; its full sequence is Apolipoprotein E (317 aa).

A signal peptide spans 1-18 (MKVLWAALLVTFLAGCQA). Repeat copies occupy residues 80 to 101 (TLMD…EQLS), 102 to 123 (PVAE…ARLG), 124 to 145 (ADME…AMLG), 146 to 167 (QSTE…KRLL), 168 to 189 (RDAD…EGAE), 190 to 211 (RGVS…VRAA), 212 to 233 (TVGS…ERLR), and 234 to 255 (ARME…EQVA). The interval 80 to 255 (TLMDETMKEL…RLDEVKEQVA (176 aa)) is 8 X 22 AA approximate tandem repeats. The residue at position 143 (M143) is a Methionine sulfoxide. S147 carries the post-translational modification Phosphoserine. The LDL and other lipoprotein receptors binding stretch occupies residues 158–168 (HLRKLRKRLLR). Residue 162-165 (LRKR) participates in heparin binding. The lipid-binding and lipoprotein association stretch occupies residues 210-290 (AATVGSLASQ…SWFEPLVEDM (81 aa)). T212 is a glycosylation site (O-linked (GalNAc...) threonine). A heparin-binding site is contributed by 229–236 (GERLRARM). The segment at 266 to 317 (QQISLQAEAFQARLKSWFEPLVEDMQRQWAGLVEKVQAAVGASTAPVPSDNH) is homooligomerization. The segment at 278-290 (RLKSWFEPLVEDM) is specificity for association with VLDL.

It belongs to the apolipoprotein A1/A4/E family. In terms of assembly, homotetramer. May interact with ABCA1; functionally associated with ABCA1 in the biogenesis of HDLs. May interact with APP/A4 amyloid-beta peptide; the interaction is extremely stable in vitro but its physiological significance is unclear. May interact with MAPT. May interact with MAP2. In the cerebrospinal fluid, interacts with secreted SORL1. Interacts with PMEL; this allows the loading of PMEL luminal fragment on ILVs to induce fibril nucleation. In terms of processing, APOE exists as multiple glycosylated and sialylated glycoforms within cells and in plasma. The extent of glycosylation and sialylation are tissue and context specific. Post-translationally, glycated in plasma VLDL. Phosphorylated by FAM20C in the extracellular medium.

The protein resides in the secreted. The protein localises to the extracellular space. It localises to the extracellular matrix. It is found in the extracellular vesicle. Its subcellular location is the endosome. The protein resides in the multivesicular body. APOE is an apolipoprotein, a protein associating with lipid particles, that mainly functions in lipoprotein-mediated lipid transport between organs via the plasma and interstitial fluids. APOE is a core component of plasma lipoproteins and is involved in their production, conversion and clearance. Apolipoproteins are amphipathic molecules that interact both with lipids of the lipoprotein particle core and the aqueous environment of the plasma. As such, APOE associates with chylomicrons, chylomicron remnants, very low density lipoproteins (VLDL) and intermediate density lipoproteins (IDL) but shows a preferential binding to high-density lipoproteins (HDL). It also binds a wide range of cellular receptors including the LDL receptor/LDLR, the LDL receptor-related proteins LRP1, LRP2 and LRP8 and the very low-density lipoprotein receptor/VLDLR that mediate the cellular uptake of the APOE-containing lipoprotein particles. Finally, APOE also has a heparin-binding activity and binds heparan-sulfate proteoglycans on the surface of cells, a property that supports the capture and the receptor-mediated uptake of APOE-containing lipoproteins by cells. A main function of APOE is to mediate lipoprotein clearance through the uptake of chylomicrons, VLDLs, and HDLs by hepatocytes. APOE is also involved in the biosynthesis by the liver of VLDLs as well as their uptake by peripheral tissues ensuring the delivery of triglycerides and energy storage in muscle, heart and adipose tissues. By participating in the lipoprotein-mediated distribution of lipids among tissues, APOE plays a critical role in plasma and tissues lipid homeostasis. APOE is also involved in two steps of reverse cholesterol transport, the HDLs-mediated transport of cholesterol from peripheral tissues to the liver, and thereby plays an important role in cholesterol homeostasis. First, it is functionally associated with ABCA1 in the biogenesis of HDLs in tissues. Second, it is enriched in circulating HDLs and mediates their uptake by hepatocytes. APOE also plays an important role in lipid transport in the central nervous system, regulating neuron survival and sprouting. This chain is Apolipoprotein E (APOE), found in Macaca nemestrina (Pig-tailed macaque).